Here is a 218-residue protein sequence, read N- to C-terminus: UPF0598 protein C8orf82 homolog (218 aa).

Belongs to the UPF0598 family.

The chain is UPF0598 protein C8orf82 homolog from Bos taurus (Bovine).